The sequence spans 158 residues: S-ribosylhomocysteine lyase (158 aa).

Fe cation contacts are provided by His54, His58, and Cys124.

The protein belongs to the LuxS family. In terms of assembly, homodimer. Fe cation is required as a cofactor.

The enzyme catalyses S-(5-deoxy-D-ribos-5-yl)-L-homocysteine = (S)-4,5-dihydroxypentane-2,3-dione + L-homocysteine. Involved in the synthesis of autoinducer 2 (AI-2) which is secreted by bacteria and is used to communicate both the cell density and the metabolic potential of the environment. The regulation of gene expression in response to changes in cell density is called quorum sensing. Catalyzes the transformation of S-ribosylhomocysteine (RHC) to homocysteine (HC) and 4,5-dihydroxy-2,3-pentadione (DPD). This chain is S-ribosylhomocysteine lyase, found in Limosilactobacillus reuteri (strain DSM 20016) (Lactobacillus reuteri).